The sequence spans 146 residues: Anti-sigma F factor (146 aa).

The protein belongs to the anti-sigma-factor family.

The enzyme catalyses L-seryl-[protein] + ATP = O-phospho-L-seryl-[protein] + ADP + H(+). It catalyses the reaction L-threonyl-[protein] + ATP = O-phospho-L-threonyl-[protein] + ADP + H(+). Binds to sigma F and blocks its ability to form an RNA polymerase holoenzyme (E-sigma F). Phosphorylates SpoIIAA on a serine residue. This phosphorylation may enable SpoIIAA to act as an anti-anti-sigma factor that counteracts SpoIIAB and thus releases sigma F from inhibition. The sequence is that of Anti-sigma F factor from Anoxybacillus flavithermus (strain DSM 21510 / WK1).